The chain runs to 421 residues: UDP-N-acetylglucosamine 1-carboxyvinyltransferase (421 aa).

Phosphoenolpyruvate is bound at residue 22–23 (KN). Arg95 is a binding site for UDP-N-acetyl-alpha-D-glucosamine. Residue Cys119 is the Proton donor of the active site. Position 119 is a 2-(S-cysteinyl)pyruvic acid O-phosphothioketal (Cys119). UDP-N-acetyl-alpha-D-glucosamine-binding positions include 124-128 (RPVDQ), Asp309, and Ile331.

This sequence belongs to the EPSP synthase family. MurA subfamily.

It is found in the cytoplasm. The enzyme catalyses phosphoenolpyruvate + UDP-N-acetyl-alpha-D-glucosamine = UDP-N-acetyl-3-O-(1-carboxyvinyl)-alpha-D-glucosamine + phosphate. The protein operates within cell wall biogenesis; peptidoglycan biosynthesis. Functionally, cell wall formation. Adds enolpyruvyl to UDP-N-acetylglucosamine. This chain is UDP-N-acetylglucosamine 1-carboxyvinyltransferase, found in Leptothrix cholodnii (strain ATCC 51168 / LMG 8142 / SP-6) (Leptothrix discophora (strain SP-6)).